The following is a 732-amino-acid chain: MGSEKDSESPRSTSLHAAAPDPKCRSGGRRRRLTFHSVFSASARGRRARTKPQAEPPPPAAPPPPPPPAPAPVEAQAPPVEALPSEPAAEAEAEAVAAGPEEDEAAEGGGAEEVECPLCLVRLPPERAPRLLSCPHRSCRDCLRHYLRLEISESRVPISCPECSERLNPHDIRLLLADPPLMHKYEEFMLRRYLASDPDCRWCPAPDCGYAVIAYGCASCPKLTCEREGCQTEFCYHCKQIWHPNQTCDMARQQRAQTLRVRTKHTSGLSYGQESGPADDIKPCPRCSAYIIKMNDGSCNHMTCAVCGCEFCWLCMKEISDLHYLSPSGCTFWGKKPWSRKKKILWQLGTLIGAPVGISLIAGIAIPAMVIGIPVYVGRKIHSRYEGRKTSKHKRNLAITGGVTLSVIASPVIAAVSVGIGVPIMLAYVYGVVPISLCRGGGCGVSTANGKGVKIEFDEDDGPITVADAWRALKNPSIGESSIEGLTSVLSTSGSPTDGLSVMQGPYSETASFAALSGGTLSGGILSSGKGKYSRLEVQADVQKEIFPKDTASLGAISDSASTRAMAGSIISSYNPQDRECNNMEIQVDIEAKPSHYQLVSGSSTEDSLHVHAQVAEKEEEGNGAGGGSGGSEDDPPYKHQSCEQKDCLASKAWDISLAQPESIRSDLESSDTQSDDVPDITSDECGSPRSHAAACPSTPQVHGAPSPSAHKNLAAPAEGQTVLKSEEYEVE.

The disordered stretch occupies residues 1 to 109; that stretch reads MGSEKDSESP…PEEDEAAEGG (109 aa). A required for ubiquitin ligase activity and for protection against staurosporin-induced cell death region spans residues 1–315; the sequence is MGSEKDSESP…VCGCEFCWLC (315 aa). The segment covering 54–71 has biased composition (pro residues); it reads AEPPPPAAPPPPPPPAPA. Over residues 72 to 99 the composition is skewed to low complexity; sequence PVEAQAPPVEALPSEPAAEAEAEAVAAG. Over residues 100 to 109 the composition is skewed to acidic residues; it reads PEEDEAAEGG. Residues 112 to 334 are TRIAD supradomain; that stretch reads EEVECPLCLV…LSPSGCTFWG (223 aa). Residues Cys-116, Cys-119, Cys-139, Cys-142, Cys-203, Cys-208, Cys-225, Cys-230, Cys-235, Cys-238, His-243, Cys-248, Cys-284, and Cys-287 each contribute to the Zn(2+) site. The RING-type 1 zinc finger occupies 116-165; that stretch reads CPLCLVRLPPERAPRLLSCPHRSCRDCLRHYLRLEISESRVPISCPECSE. The IBR-type zinc-finger motif lies at 183 to 248; sequence HKYEEFMLRR…KQIWHPNQTC (66 aa). The RING-type 2; atypical zinc-finger motif lies at 284-315; that stretch reads CPRCSAYIIKMNDGSCNHMTCAVCGCEFCWLC. Cys-299 is an active-site residue. Zn(2+) is bound by residues Cys-304, Cys-307, Cys-312, Cys-315, His-323, and Cys-330. 2 consecutive transmembrane segments (helical) span residues 351–371 and 412–432; these read LIGAPVGISLIAGIAIPAMVI and VIAAVSVGIGVPIMLAYVYGV. Disordered stretches follow at residues 598–644 and 660–732; these read QLVS…QSCE and QPES…YEVE. The segment covering 674–683 has biased composition (acidic residues); that stretch reads QSDDVPDITS.

Belongs to the RBR family. RNF19 subfamily. In terms of assembly, interacts with UBE2L3, UBE2L6 and UCKL1. As to expression, expressed specifically in natural killer cells, activated macrophages and cytotoxic T-cells. Present in macrophages (at protein level). Ubiquitously expressed with high expression in testis.

Its subcellular location is the cytoplasmic granule membrane. It is found in the endoplasmic reticulum membrane. It carries out the reaction [E2 ubiquitin-conjugating enzyme]-S-ubiquitinyl-L-cysteine + [acceptor protein]-L-lysine = [E2 ubiquitin-conjugating enzyme]-L-cysteine + [acceptor protein]-N(6)-ubiquitinyl-L-lysine.. It participates in protein modification; protein ubiquitination. In terms of biological role, E3 ubiquitin-protein ligase which accepts ubiquitin from E2 ubiquitin-conjugating enzymes UBE2L3 and UBE2L6 in the form of a thioester and then directly transfers the ubiquitin to targeted substrates, such as UCKL1. Involved in the cytolytic activity of natural killer cells and cytotoxic T-cells. Protects against staurosporin-induced cell death. The chain is E3 ubiquitin-protein ligase RNF19B (Rnf19b) from Mus musculus (Mouse).